A 434-amino-acid chain; its full sequence is Protein TolB homolog (434 aa).

Positions 1 to 27 (MRSTRNSFACLCIMLFGMLFVPFTLRA) are cleaved as a signal peptide. A disordered region spans residues 413–434 (SNQRPLLNMQGEQQQPSWSVSK).

Belongs to the TolB family.

Its subcellular location is the periplasm. In Chlorobaculum tepidum (strain ATCC 49652 / DSM 12025 / NBRC 103806 / TLS) (Chlorobium tepidum), this protein is Protein TolB homolog.